The chain runs to 139 residues: Small ribosomal subunit protein uS12 (139 aa).

The disordered stretch occupies residues 1–55; that stretch reads MPTINQLIRKGRKAKVKKSDSPALNKGYNSFKKVQTDLSSPQKRGVCTRVGTMTP. Residues 32–42 show a composition bias toward polar residues; the sequence is KKVQTDLSSPQ.

This sequence belongs to the universal ribosomal protein uS12 family. Part of the 30S ribosomal subunit. Contacts proteins S8 and S17. May interact with IF1 in the 30S initiation complex.

In terms of biological role, with S4 and S5 plays an important role in translational accuracy. Interacts with and stabilizes bases of the 16S rRNA that are involved in tRNA selection in the A site and with the mRNA backbone. Located at the interface of the 30S and 50S subunits, it traverses the body of the 30S subunit contacting proteins on the other side and probably holding the rRNA structure together. The combined cluster of proteins S8, S12 and S17 appears to hold together the shoulder and platform of the 30S subunit. This Halalkalibacterium halodurans (strain ATCC BAA-125 / DSM 18197 / FERM 7344 / JCM 9153 / C-125) (Bacillus halodurans) protein is Small ribosomal subunit protein uS12.